Here is a 164-residue protein sequence, read N- to C-terminus: Putative pre-16S rRNA nuclease (164 aa).

The protein belongs to the YqgF nuclease family.

It is found in the cytoplasm. Could be a nuclease involved in processing of the 5'-end of pre-16S rRNA. The sequence is that of Putative pre-16S rRNA nuclease from Rhizobium rhizogenes (strain K84 / ATCC BAA-868) (Agrobacterium radiobacter).